Here is a 258-residue protein sequence, read N- to C-terminus: Axonemal dynein light intermediate polypeptide 1 (258 aa).

2 disordered regions span residues 1–60 (MIPP…CVPD) and 207–231 (VNEQ…EEKK). Positions 34 to 44 (SPQQPGPSGSA) are enriched in low complexity. Residues 176 to 255 (MRKALQAEQG…LKAQLEGIIA (80 aa)) adopt a coiled-coil conformation.

This sequence belongs to the inner dynein arm light chain family. In terms of assembly, interacts with CFAP45. Interacts with DYNC1H1. As to expression, expressed in many tissues. A smaller 0.9 kb and a larger 2.5 kb transcripts were detected at the highest level in the testis, at medium levels in the prostate, heart, liver, lung and pancreas, at low levels in the ovary, skeletal muscle and small intestine. Not detected in spleen, colon epithelium, thymus or peripheral blood leukocytes. The 0.9 kb transcript is expressed at a 20-fold higher level than the 2.5 kb transcript in the testis. Expressed in spermatozoa and airway epithelial cells (at protein level).

Its subcellular location is the cell projection. It is found in the cilium. The protein resides in the flagellum. It localises to the dynein axonemal particle. The protein localises to the cytoplasm. In terms of biological role, involved in sperm flagellum assembly. This Homo sapiens (Human) protein is Axonemal dynein light intermediate polypeptide 1.